We begin with the raw amino-acid sequence, 41 residues long: Large ribosomal subunit protein bL36 (41 aa).

This sequence belongs to the bacterial ribosomal protein bL36 family.

The polypeptide is Large ribosomal subunit protein bL36 (Rhodopseudomonas palustris (strain BisB18)).